The chain runs to 457 residues: MDHLPIFCQLRQRDCLLVGGGDVAERKARLLLDAGANVTVNALDFTPQFQVWADSQMLTLVQGEFIPSLLDNCWLAIAATDDETVNQQVSEAAEARRIFCNVVDAPRQASFIMPSIIDRSPLMVAVSSGGTSPVLARLLREKLESILPLHLGQLARYAGHLRARVKQQFATVGERRRFWEKLFVNDRLAQSLANDDRQAVADTTEQLLTEPLEHRGEVVLVGAGPGDAGLLTLKGLQQIQQADVVVYDRLVSDDIMNLVRRDADRVFVGKRSGYHCVPQEEINQILLREAQKGRRVVRLKGGDPFIFGRGGEELETLCEAGIPFSVVPGITAASGCSAYSGIPLTHRDFAQGVRLVTGHLKTGGELDWANLAVEKQTLVFYMGLNQAPAIREKLIAHGMAEDMPAAIVENGTAVTQKVVSGTLGQLDILAQQMASPALIIVGRVVGLRDKLNWFSNH.

The interval 1 to 204 is precorrin-2 dehydrogenase /sirohydrochlorin ferrochelatase; the sequence is MDHLPIFCQL…DDRQAVADTT (204 aa). Residues 22-23 and 43-44 contribute to the NAD(+) site; these read DV and LD. Ser128 bears the Phosphoserine mark. A uroporphyrinogen-III C-methyltransferase region spans residues 216–457; sequence GEVVLVGAGP…RDKLNWFSNH (242 aa). An S-adenosyl-L-methionine-binding site is contributed by Pro225. The active-site Proton acceptor is Asp248. Lys270 (proton donor) is an active-site residue. S-adenosyl-L-methionine-binding positions include 301-303, Ile306, 331-332, Met382, and Gly411; these read GGD and TA.

This sequence in the N-terminal section; belongs to the precorrin-2 dehydrogenase / sirohydrochlorin ferrochelatase family. The protein in the C-terminal section; belongs to the precorrin methyltransferase family.

The enzyme catalyses uroporphyrinogen III + 2 S-adenosyl-L-methionine = precorrin-2 + 2 S-adenosyl-L-homocysteine + H(+). It carries out the reaction precorrin-2 + NAD(+) = sirohydrochlorin + NADH + 2 H(+). It catalyses the reaction siroheme + 2 H(+) = sirohydrochlorin + Fe(2+). Its pathway is cofactor biosynthesis; adenosylcobalamin biosynthesis; precorrin-2 from uroporphyrinogen III: step 1/1. The protein operates within cofactor biosynthesis; adenosylcobalamin biosynthesis; sirohydrochlorin from precorrin-2: step 1/1. It participates in porphyrin-containing compound metabolism; siroheme biosynthesis; precorrin-2 from uroporphyrinogen III: step 1/1. It functions in the pathway porphyrin-containing compound metabolism; siroheme biosynthesis; siroheme from sirohydrochlorin: step 1/1. Its pathway is porphyrin-containing compound metabolism; siroheme biosynthesis; sirohydrochlorin from precorrin-2: step 1/1. Functionally, multifunctional enzyme that catalyzes the SAM-dependent methylations of uroporphyrinogen III at position C-2 and C-7 to form precorrin-2 via precorrin-1. Then it catalyzes the NAD-dependent ring dehydrogenation of precorrin-2 to yield sirohydrochlorin. Finally, it catalyzes the ferrochelation of sirohydrochlorin to yield siroheme. In Klebsiella pneumoniae subsp. pneumoniae (strain ATCC 700721 / MGH 78578), this protein is Siroheme synthase 2.